Here is a 458-residue protein sequence, read N- to C-terminus: Bifunctional protein GlmU (458 aa).

The pyrophosphorylase stretch occupies residues 1-229 (MNKFAIVLAA…FDESLGVNDR (229 aa)). UDP-N-acetyl-alpha-D-glucosamine is bound by residues 8 to 11 (LAAG), Lys22, Gln72, and 77 to 78 (GT). Mg(2+) is bound at residue Asp102. Positions 139, 154, 169, and 227 each coordinate UDP-N-acetyl-alpha-D-glucosamine. A Mg(2+)-binding site is contributed by Asn227. A linker region spans residues 230-250 (VALSQAEGTMRKRINHEHMVN). Positions 251–458 (GVTLIDPATT…AKKMPHYRGQ (208 aa)) are N-acetyltransferase. Residues Arg332 and Lys350 each contribute to the UDP-N-acetyl-alpha-D-glucosamine site. Catalysis depends on His362, which acts as the Proton acceptor. Residues Tyr365 and Asn376 each coordinate UDP-N-acetyl-alpha-D-glucosamine. Acetyl-CoA contacts are provided by Ala379, Ser404, Ala422, and Arg439.

In the N-terminal section; belongs to the N-acetylglucosamine-1-phosphate uridyltransferase family. This sequence in the C-terminal section; belongs to the transferase hexapeptide repeat family. In terms of assembly, homotrimer. It depends on Mg(2+) as a cofactor.

The protein localises to the cytoplasm. It carries out the reaction alpha-D-glucosamine 1-phosphate + acetyl-CoA = N-acetyl-alpha-D-glucosamine 1-phosphate + CoA + H(+). The enzyme catalyses N-acetyl-alpha-D-glucosamine 1-phosphate + UTP + H(+) = UDP-N-acetyl-alpha-D-glucosamine + diphosphate. It participates in nucleotide-sugar biosynthesis; UDP-N-acetyl-alpha-D-glucosamine biosynthesis; N-acetyl-alpha-D-glucosamine 1-phosphate from alpha-D-glucosamine 6-phosphate (route II): step 2/2. Its pathway is nucleotide-sugar biosynthesis; UDP-N-acetyl-alpha-D-glucosamine biosynthesis; UDP-N-acetyl-alpha-D-glucosamine from N-acetyl-alpha-D-glucosamine 1-phosphate: step 1/1. It functions in the pathway bacterial outer membrane biogenesis; LPS lipid A biosynthesis. Its function is as follows. Catalyzes the last two sequential reactions in the de novo biosynthetic pathway for UDP-N-acetylglucosamine (UDP-GlcNAc). The C-terminal domain catalyzes the transfer of acetyl group from acetyl coenzyme A to glucosamine-1-phosphate (GlcN-1-P) to produce N-acetylglucosamine-1-phosphate (GlcNAc-1-P), which is converted into UDP-GlcNAc by the transfer of uridine 5-monophosphate (from uridine 5-triphosphate), a reaction catalyzed by the N-terminal domain. This chain is Bifunctional protein GlmU, found in Lactococcus lactis subsp. cremoris (strain SK11).